Here is a 1073-residue protein sequence, read N- to C-terminus: Carbamoyl phosphate synthase large chain (1073 aa).

Positions 1–403 (MPKRTDIKSI…SLQKALRGLE (403 aa)) are carboxyphosphate synthetic domain. Residues Arg-129, Arg-169, Gly-175, Gly-176, Glu-208, Leu-210, Glu-215, Gly-241, Val-242, His-243, Gln-285, and Glu-299 each contribute to the ATP site. Positions 133-328 (DKAMKSIGLA…IARVAAKLAV (196 aa)) constitute an ATP-grasp 1 domain. Residues Gln-285, Glu-299, and Asn-301 each coordinate Mg(2+). 3 residues coordinate Mn(2+): Gln-285, Glu-299, and Asn-301. Positions 404-553 (VGVCGLDPKL…YSTYEEECEA (150 aa)) are oligomerization domain. The interval 554–935 (NPSTRDKIMI…AFAKAQMGAS (382 aa)) is carbamoyl phosphate synthetic domain. The region spanning 678–869 (QQMVERLNLR…LAMIAARVMA (192 aa)) is the ATP-grasp 2 domain. Residues Arg-714, His-753, Leu-755, Glu-760, Gly-785, Val-786, His-787, Ser-788, Gln-828, and Glu-840 each coordinate ATP. Residues Gln-828, Glu-840, and Asn-842 each contribute to the Mg(2+) site. 3 residues coordinate Mn(2+): Gln-828, Glu-840, and Asn-842. The MGS-like domain maps to 936 to 1073 (EVLPTGGTAF…LQDLHAGLKA (138 aa)). Residues 936-1073 (EVLPTGGTAF…LQDLHAGLKA (138 aa)) form an allosteric domain region.

The protein belongs to the CarB family. In terms of assembly, composed of two chains; the small (or glutamine) chain promotes the hydrolysis of glutamine to ammonia, which is used by the large (or ammonia) chain to synthesize carbamoyl phosphate. Tetramer of heterodimers (alpha,beta)4. The cofactor is Mg(2+). It depends on Mn(2+) as a cofactor.

It carries out the reaction hydrogencarbonate + L-glutamine + 2 ATP + H2O = carbamoyl phosphate + L-glutamate + 2 ADP + phosphate + 2 H(+). It catalyses the reaction hydrogencarbonate + NH4(+) + 2 ATP = carbamoyl phosphate + 2 ADP + phosphate + 2 H(+). Its pathway is amino-acid biosynthesis; L-arginine biosynthesis; carbamoyl phosphate from bicarbonate: step 1/1. It participates in pyrimidine metabolism; UMP biosynthesis via de novo pathway; (S)-dihydroorotate from bicarbonate: step 1/3. Its function is as follows. Large subunit of the glutamine-dependent carbamoyl phosphate synthetase (CPSase). CPSase catalyzes the formation of carbamoyl phosphate from the ammonia moiety of glutamine, carbonate, and phosphate donated by ATP, constituting the first step of 2 biosynthetic pathways, one leading to arginine and/or urea and the other to pyrimidine nucleotides. The large subunit (synthetase) binds the substrates ammonia (free or transferred from glutamine from the small subunit), hydrogencarbonate and ATP and carries out an ATP-coupled ligase reaction, activating hydrogencarbonate by forming carboxy phosphate which reacts with ammonia to form carbamoyl phosphate. The sequence is that of Carbamoyl phosphate synthase large chain from Pseudomonas syringae pv. tomato (strain ATCC BAA-871 / DC3000).